Here is a 394-residue protein sequence, read N- to C-terminus: NAD(P)H-quinone oxidoreductase subunit H (394 aa).

This sequence belongs to the complex I 49 kDa subunit family. NDH-1 can be composed of about 15 different subunits; different subcomplexes with different compositions have been identified which probably have different functions.

It localises to the cellular thylakoid membrane. It carries out the reaction a plastoquinone + NADH + (n+1) H(+)(in) = a plastoquinol + NAD(+) + n H(+)(out). The catalysed reaction is a plastoquinone + NADPH + (n+1) H(+)(in) = a plastoquinol + NADP(+) + n H(+)(out). Its function is as follows. NDH-1 shuttles electrons from an unknown electron donor, via FMN and iron-sulfur (Fe-S) centers, to quinones in the respiratory and/or the photosynthetic chain. The immediate electron acceptor for the enzyme in this species is believed to be plastoquinone. Couples the redox reaction to proton translocation, and thus conserves the redox energy in a proton gradient. Cyanobacterial NDH-1 also plays a role in inorganic carbon-concentration. The protein is NAD(P)H-quinone oxidoreductase subunit H of Prochlorococcus marinus (strain MIT 9211).